A 51-amino-acid polypeptide reads, in one-letter code: Ribosome biogenesis protein Nop10 (51 aa).

It belongs to the NOP10 family.

In terms of biological role, involved in ribosome biogenesis; more specifically in 18S rRNA pseudouridylation and in cleavage of pre-rRNA. This Methanococcus maripaludis (strain C6 / ATCC BAA-1332) protein is Ribosome biogenesis protein Nop10.